Here is a 1256-residue protein sequence, read N- to C-terminus: Cohesin subunit SA-3 (1256 aa).

A compositionally biased stretch (low complexity) spans 1-22; that stretch reads MPTLWSPSTQHHGSSSGSMSSP. Residues 1–110 form a disordered region; that stretch reads MPTLWSPSTQ…GGNDKNKSVP (110 aa). Over residues 72–83 the composition is skewed to basic residues; that stretch reads RNVRKRAAKRPP. The region spanning 324–409 is the SCD domain; sequence FVHRYRDILP…NRFKDRMVSM (86 aa). Disordered stretches follow at residues 1096–1169 and 1230–1256; these read RRLQ…GPEL and KLLH…MEDF. The span at 1113–1125 shows a compositional bias: polar residues; that stretch reads NSGPTTPTLTSTA. Residues 1126 to 1140 show a composition bias toward basic residues; sequence VKRRQSPRTVGKRQK. The span at 1144–1166 shows a compositional bias: pro residues; the sequence is GPGPGPGPGPGPGPGPGPGPGPG. Ser-1234 carries the phosphoserine modification.

Belongs to the SCC3 family. Component of the meiosis-specific cohesin complex, which also contains the SMC1 (SMC1A or SMC1B) and SMC3 heterodimer. Such complex likely contains RAD21, or the meiosis-specific related protein REC8. Interacts with CCDC79/TERB1; recruiting cohesin to telomeres to develop structural rigidity. Phosphorylated. Testis specific.

The protein localises to the nucleus. It is found in the chromosome. Functionally, meiosis specific component of cohesin complex. The cohesin complex is required for the cohesion of sister chromatids after DNA replication. The cohesin complex apparently forms a large proteinaceous ring within which sister chromatids can be trapped. At anaphase, the complex is cleaved and dissociates from chromatin, allowing sister chromatids to segregate. The meiosis-specific cohesin complex probably replaces mitosis specific cohesin complex when it dissociates from chromatin during prophase I. In Rattus norvegicus (Rat), this protein is Cohesin subunit SA-3 (Stag3).